Here is a 65-residue protein sequence, read N- to C-terminus: Hirudin-3 (65 aa).

The interval 1 to 3 is interaction with thrombin active site; the sequence is VVY. 3 disulfides stabilise this stretch: Cys-6–Cys-14, Cys-16–Cys-28, and Cys-22–Cys-39. A disordered region spans residues 39–65; the sequence is CVTGEGTPKPQSHNDGDFEEIPEEYLQ. The O-linked (GalNAc...) threonine glycan is linked to Thr-45. An interaction with fibrinogen-binding exosite of thrombin region spans residues 55 to 65; that stretch reads DFEEIPEEYLQ. A compositionally biased stretch (acidic residues) spans 55–65; sequence DFEEIPEEYLQ. Residue Tyr-63 is modified to Sulfotyrosine.

The protein belongs to the protease inhibitor I14 (hirudin) family.

The protein localises to the secreted. Hirudin is a potent thrombin-specific protease inhibitor. It forms a stable non-covalent complex with alpha-thrombin, thereby abolishing its ability to cleave fibrinogen. The polypeptide is Hirudin-3 (Hirudo medicinalis (Medicinal leech)).